A 242-amino-acid chain; its full sequence is Peptidase E (242 aa).

Catalysis depends on charge relay system residues Ser123, Asp138, and His160.

This sequence belongs to the peptidase S51 family.

It is found in the cytoplasm. The enzyme catalyses Dipeptidase E catalyzes the hydrolysis of dipeptides Asp-|-Xaa. It does not act on peptides with N-terminal Glu, Asn or Gln, nor does it cleave isoaspartyl peptides.. Hydrolyzes dipeptides containing N-terminal aspartate residues. May play a role in allowing the cell to use peptide aspartate to spare carbon otherwise required for the synthesis of the aspartate family of amino acids. The sequence is that of Peptidase E from Nostoc sp. (strain PCC 7120 / SAG 25.82 / UTEX 2576).